Here is a 224-residue protein sequence, read N- to C-terminus: Ribosomal RNA small subunit methyltransferase G (224 aa).

S-adenosyl-L-methionine contacts are provided by residues glycine 89, phenylalanine 94, alanine 140–glutamate 141, and arginine 153.

Belongs to the methyltransferase superfamily. RNA methyltransferase RsmG family.

It is found in the cytoplasm. In terms of biological role, specifically methylates the N7 position of a guanine in 16S rRNA. The protein is Ribosomal RNA small subunit methyltransferase G of Bacteroides fragilis (strain YCH46).